The primary structure comprises 496 residues: Omega-crystallin (496 aa).

This sequence belongs to the aldehyde dehydrogenase family. As to expression, lens.

Functionally, omega-crystallins are structural components of squids and octopi eye lens. Contains relatively little if any DHAL activity. In Enteroctopus dofleini (North Pacific giant octopus), this protein is Omega-crystallin.